Reading from the N-terminus, the 538-residue chain is MSMPIASTTLAVNNLTNINGNANFNVQANKQLHHQAVDSPARSSMTATTAANSNSNSSRDDSTIVGLHYKIGKKIGEGSFGVLFEGTNMINGVPVAIKFEPRKTEAPQLRDEYKTYKILNGTPNIPYAYYFGQEGLHNILVIDLLGPSLEDLFDWCGRKFSVKTVVQVAVQMITLIEDLHAHDLIYRDIKPDNFLIGRPGQPDANNIHLIDFGMAKQYRDPKTKQHIPYREKKSLSGTARYMSINTHLGREQSRRDDMEALGHVFFYFLRGHLPWQGLKAPNNKQKYEKIGEKKRSTNVYDLAQGLPVQFGRYLEIVRSLSFEECPDYEGYRKLLLSVLDDLGETADGQYDWMKLNDGRGWDLNINKKPNLHGYGHPNPPNEKSRKHRNKQLQMQQLQMQQLQQQQQQQQYAQKTEADMRNSQYKPKLDPTSYEAYQHQTQQKYLQEQQKRQQQQKLQEQQLQEQQLQQQQQQQQQLRATGQPPSQPQAQTQSQQFGARYQPQQQPSAALRTPEQHPNDDNSSLAASHKGFFQKLGCC.

A disordered region spans residues 39 to 61; it reads SPARSSMTATTAANSNSNSSRDD. The segment covering 41-57 has biased composition (low complexity); that stretch reads ARSSMTATTAANSNSNS. The Protein kinase domain maps to 69-353; sequence YKIGKKIGEG…ETADGQYDWM (285 aa). ATP contacts are provided by residues 75 to 83 and K98; that span reads IGEGSFGVL. Residue D188 is the Proton acceptor of the active site. 2 disordered regions span residues 366-428 and 474-527; these read NKKP…KPKL and QQQL…LAAS. Low complexity-rich tracts occupy residues 391-410 and 474-498; these read QLQMQQLQMQQLQQQQQQQQ and QQQLRATGQPPSQPQAQTQSQQFGA. 3 positions are modified to phosphoserine: S522, S523, and S527. 2 S-palmitoyl cysteine lipidation sites follow: C537 and C538.

The protein belongs to the protein kinase superfamily. CK1 Ser/Thr protein kinase family. Casein kinase I subfamily. Palmitoylated by AKR1.

It is found in the cell membrane. It localises to the mitochondrion membrane. The catalysed reaction is L-seryl-[protein] + ATP = O-phospho-L-seryl-[protein] + ADP + H(+). It carries out the reaction L-threonyl-[protein] + ATP = O-phospho-L-threonyl-[protein] + ADP + H(+). Its function is as follows. Casein kinases are operationally defined by their preferential utilization of acidic proteins such as caseins as substrates. In Saccharomyces cerevisiae (strain ATCC 204508 / S288c) (Baker's yeast), this protein is Casein kinase I homolog 1 (YCK1).